The following is a 193-amino-acid chain: Ion-translocating oxidoreductase complex subunit A (193 aa).

6 helical membrane-spanning segments follow: residues 5–25, 39–59, 63–83, 102–122, 134–154, and 171–191; these read LLLFVGTVLVNNFVLVKFLGL, MGMGLATTFVMTLTSICAWLI, ILIPLNLIYLRTLAFILVIAV, LLGIFLPLITTNCAVLGVALL, ALYGFSAAVGFSLVMVLFAAI, and AIALITAGLMSLAFMGFSGLV.

Belongs to the NqrDE/RnfAE family. In terms of assembly, the complex is composed of six subunits: RsxA, RsxB, RsxC, RsxD, RsxE and RsxG.

The protein resides in the cell inner membrane. Part of a membrane-bound complex that couples electron transfer with translocation of ions across the membrane. Required to maintain the reduced state of SoxR. The chain is Ion-translocating oxidoreductase complex subunit A from Shigella flexneri serotype 5b (strain 8401).